Here is a 298-residue protein sequence, read N- to C-terminus: Glutamyl-Q tRNA(Asp) synthetase (298 aa).

L-glutamate is bound by residues 9–13 and glutamate 45; that span reads RFAPS. The 'HIGH' region signature appears at 12 to 22; the sequence is PSPSGELHFGS. Zn(2+)-binding residues include cysteine 101, cysteine 103, tyrosine 115, and cysteine 119. Residues tyrosine 172 and arginine 190 each contribute to the L-glutamate site. A 'KMSKS' region motif is present at residues 228–232; the sequence is KLSKQ. ATP is bound at residue lysine 231.

Belongs to the class-I aminoacyl-tRNA synthetase family. GluQ subfamily. It depends on Zn(2+) as a cofactor.

Its function is as follows. Catalyzes the tRNA-independent activation of glutamate in presence of ATP and the subsequent transfer of glutamate onto a tRNA(Asp). Glutamate is transferred on the 2-amino-5-(4,5-dihydroxy-2-cyclopenten-1-yl) moiety of the queuosine in the wobble position of the QUC anticodon. In Salmonella typhi, this protein is Glutamyl-Q tRNA(Asp) synthetase.